Here is a 201-residue protein sequence, read N- to C-terminus: Probable GTP-binding protein EngB (201 aa).

Residues 22 to 195 form the EngB-type G domain; the sequence is TQPEFAFAGK…WRCIEQFLEV (174 aa). Residues 30–37, 57–61, 75–78, 142–145, and 174–176 each bind GTP; these read GKSNVGKS, GKTQT, DLPG, TKLD, and FSS. Residues S37 and T59 each contribute to the Mg(2+) site.

Belongs to the TRAFAC class TrmE-Era-EngA-EngB-Septin-like GTPase superfamily. EngB GTPase family. Mg(2+) is required as a cofactor.

Its function is as follows. Necessary for normal cell division and for the maintenance of normal septation. This chain is Probable GTP-binding protein EngB, found in Lachnoclostridium phytofermentans (strain ATCC 700394 / DSM 18823 / ISDg) (Clostridium phytofermentans).